Reading from the N-terminus, the 278-residue chain is Bis(5'-nucleosyl)-tetraphosphatase, symmetrical (278 aa).

This sequence belongs to the Ap4A hydrolase family.

It catalyses the reaction P(1),P(4)-bis(5'-adenosyl) tetraphosphate + H2O = 2 ADP + 2 H(+). In terms of biological role, hydrolyzes diadenosine 5',5'''-P1,P4-tetraphosphate to yield ADP. In Nitrosococcus oceani (strain ATCC 19707 / BCRC 17464 / JCM 30415 / NCIMB 11848 / C-107), this protein is Bis(5'-nucleosyl)-tetraphosphatase, symmetrical.